A 287-amino-acid polypeptide reads, in one-letter code: uncharacterized protein (287 aa).

A disordered region spans residues 1-44 (MAAPRNLTGDGGARQLVKDEESPAASSAAKGLLNDDSPTGKRTK). S37 bears the Phosphoserine mark. Helical transmembrane passes span 55 to 75 (FAVF…IYLT), 124 to 144 (TFMI…FGVV), 147 to 167 (FVLV…LSKL), 218 to 238 (PIVD…LMPA), and 260 to 280 (DFKT…PALL).

The protein resides in the membrane. This is an uncharacterized protein from Arabidopsis thaliana (Mouse-ear cress).